The primary structure comprises 20 residues: Brevinin-1T (20 aa).

C14 and C20 are disulfide-bonded.

This sequence belongs to the frog skin active peptide (FSAP) family. Brevinin subfamily. In terms of tissue distribution, expressed by the skin glands.

It is found in the secreted. In terms of biological role, antibacterial activity against representative Gram-negative and Gram-positive bacteria and exhibits a very high hemolytic activity. The sequence is that of Brevinin-1T from Rana temporaria (European common frog).